Consider the following 404-residue polypeptide: Druantia protein DruA (404 aa).

It is found in the cytoplasm. Functionally, component of antiviral defense system Druantia type I, composed of DruA, DruB, DruC, DruD and DruE. Expression of Druantia in E.coli (strain MG1655) confers resistance to phage lambda, SECphi18, SECphi27 and T4. This is Druantia protein DruA from Escherichia coli (strain UMEA 4076-1).